A 505-amino-acid polypeptide reads, in one-letter code: MFS-type transporter oryN (505 aa).

The disordered stretch occupies residues 1 to 54 (MAVAELPNIVSTDSSPSPHPGSRLSSEPTDIESQKAPSNAEPKTDPNLVTWDGP). The next 13 helical transmembrane spans lie at 69-89 (AFVT…SSIF), 106-126 (VVTL…PVWG), 135-155 (KWPM…VAVA), 166-186 (FLTG…LVDM), 193-213 (GVAM…APLM), 226-246 (FTQW…VFGL), 280-300 (GIKD…VTEP), 301-321 (ILLL…LVFV), 337-357 (ISAL…AIVV), 376-396 (LPLM…FAWT), 401-421 (IHWA…YMVF), 440-460 (IGAN…FGPF), and 468-488 (AWAS…PVLF).

Belongs to the major facilitator superfamily. CAR1 family.

It is found in the membrane. In terms of biological role, MFS-type transporter; part of the gene cluster that mediates the biosynthesis of oryzines, natural products with an unusual maleidride backbone. This Aspergillus oryzae (strain ATCC 42149 / RIB 40) (Yellow koji mold) protein is MFS-type transporter oryN.